The primary structure comprises 492 residues: Alpha-amylase-related protein (492 aa).

The N-terminal stretch at 1 to 18 (MRLSLSVLLCLGLALTLA) is a signal peptide. A Pyrrolidone carboxylic acid modification is found at glutamine 19. A disulfide bond links cysteine 46 and cysteine 102. Ca(2+)-binding residues include asparagine 116, glutamine 167, and aspartate 176. Cysteines 155 and 169 form a disulfide. Arginine 204 is a binding site for chloride. Aspartate 206 serves as the catalytic Nucleophile. Residue histidine 210 coordinates Ca(2+). Catalysis depends on glutamate 243, which acts as the Proton donor. Chloride-binding residues include asparagine 306 and arginine 341. 3 disulfide bridges follow: cysteine 374/cysteine 380, cysteine 416/cysteine 439, and cysteine 446/cysteine 458.

Belongs to the glycosyl hydrolase 13 family. In terms of assembly, monomer. Requires Ca(2+) as cofactor. Chloride serves as cofactor.

It is found in the secreted. It catalyses the reaction Endohydrolysis of (1-&gt;4)-alpha-D-glucosidic linkages in polysaccharides containing three or more (1-&gt;4)-alpha-linked D-glucose units.. The chain is Alpha-amylase-related protein (Amyrel) from Drosophila willistoni (Fruit fly).